Here is a 149-residue protein sequence, read N- to C-terminus: MSTSSCSFKDRRVSILCCKFCKQVLSSRGMKAVLLADTEIDLFSTDIPPTNAVDFIGRCYFTEICKCKLKDIACLKCGNIVGYHVIVPCCSCLLSCNNGHFWMFHSQAVYGINRLDSTGVNFLLWGNLPEVEENTDEDMLDISAEECIR.

It belongs to the FAM72 family. Interacts with UNG. As to expression, expressed at high levels in stomach and also in kidney and, at low levels, in heart (at protein level). In the stomach, highly expressed in foveolar cells, parietal cells and chief cells (at protein level). In kidney, expressed in endothelial cells, mesangial and epithelial cells (parietal and visceral epithelium) around glomerulus (at protein level).

It is found in the cytoplasm. The protein resides in the mitochondrion. Its function is as follows. May play a role in the regulation of cellular reactive oxygen species metabolism. May participate in cell growth regulation. This chain is Protein FAM72A (FAM72A), found in Bos taurus (Bovine).